Reading from the N-terminus, the 157-residue chain is Cyclic pyranopterin monophosphate synthase (157 aa).

Substrate is bound by residues 75–77 (LCH) and 111–112 (ME). Asp-126 is an active-site residue.

Belongs to the MoaC family. In terms of assembly, homohexamer; trimer of dimers.

The enzyme catalyses (8S)-3',8-cyclo-7,8-dihydroguanosine 5'-triphosphate = cyclic pyranopterin phosphate + diphosphate. The protein operates within cofactor biosynthesis; molybdopterin biosynthesis. Catalyzes the conversion of (8S)-3',8-cyclo-7,8-dihydroguanosine 5'-triphosphate to cyclic pyranopterin monophosphate (cPMP). The polypeptide is Cyclic pyranopterin monophosphate synthase (Novosphingobium aromaticivorans (strain ATCC 700278 / DSM 12444 / CCUG 56034 / CIP 105152 / NBRC 16084 / F199)).